Consider the following 992-residue polypeptide: Disks large-associated protein 4 (992 aa).

Over residues 1-20 (MKGLGDSRPRHLSDSLDPPH) the composition is skewed to basic and acidic residues. 3 disordered regions span residues 1-30 (MKGLGDSRPRHLSDSLDPPHEPLFAGTDRN), 47-66 (PGQNTLPGDGLFPLNNQLPP), and 157-206 (LEGT…GWWS). Residues 162 to 171 (GKVGGNGSKK) show a composition bias toward gly residues. The segment covering 172-194 (GGMEDGKGRRAKSKERAKAGEPK) has biased composition (basic and acidic residues). 2 positions are modified to phosphoserine: S206 and S207. R291 carries the post-translational modification Omega-N-methylarginine. Residues 342 to 396 (STTLLSPRETDAAAEGPIPCRRMRSGSYIKAMGDEDSDESGGSPKPSPKTAARRQ) are disordered. S378, S381, S388, S405, S415, and S421 each carry phosphoserine. Disordered regions lie at residues 527–751 (SVSL…GPRQ), 763–798 (SYGDNSDPALEASSLPPPDPWLETSSSSPAEPAQPG), and 915–992 (TPEK…QTRL). Residues 528 to 554 (VSLQSLSPPPSTGSLSNSRTLPSSSCL) are compositionally biased toward low complexity. The span at 576–591 (VTVQSSTESAQDTYLD) shows a compositional bias: polar residues. 6 positions are modified to phosphoserine: S580, S581, S609, S611, S665, and S744. Positions 600–620 (TSQSGLSNSSDSLDSSTRPPS) are enriched in low complexity. A Phosphothreonine modification is found at T915. Basic and acidic residues-rich tracts occupy residues 915-925 (TPEKRKEEKKP) and 940-958 (VSRDKASDASDKQRQEARK). Polar residues predominate over residues 969 to 978 (VRQNSATESA). A Phosphoserine modification is found at S973.

The protein belongs to the SAPAP family. As to quaternary structure, interacts with DLG1 and DLG4/PSD-95.

Its subcellular location is the membrane. Its function is as follows. May play a role in the molecular organization of synapses and neuronal cell signaling. Could be an adapter protein linking ion channel to the subsynaptic cytoskeleton. May induce enrichment of PSD-95/SAP90 at the plasma membrane. This is Disks large-associated protein 4 (DLGAP4) from Homo sapiens (Human).